A 308-amino-acid chain; its full sequence is Glycine--tRNA ligase alpha subunit (308 aa).

The protein belongs to the class-II aminoacyl-tRNA synthetase family. As to quaternary structure, tetramer of two alpha and two beta subunits.

Its subcellular location is the cytoplasm. It catalyses the reaction tRNA(Gly) + glycine + ATP = glycyl-tRNA(Gly) + AMP + diphosphate. This Polaromonas naphthalenivorans (strain CJ2) protein is Glycine--tRNA ligase alpha subunit.